The sequence spans 155 residues: FHA domain-containing protein FhaB (155 aa).

Residues 6-28 (LQLTRVGFLLLLWLFIWSVLRIL) traverse the membrane as a helical segment. The residue at position 36 (T36) is a Phosphothreonine. The region spanning 83–132 (VLIGRADDSTLVLTDDYASTRHARLSPRGSEWYVEDLGSTNGTYLDRAKV) is the FHA domain.

Phosphorylated by PknB. Dephosphorylated by PstP.

It is found in the cell membrane. The chain is FHA domain-containing protein FhaB (fhaB) from Mycolicibacterium smegmatis (strain ATCC 700084 / mc(2)155) (Mycobacterium smegmatis).